We begin with the raw amino-acid sequence, 390 residues long: Altered inheritance of mitochondria protein 6 (390 aa).

The signal sequence occupies residues 1–26; that stretch reads MLGLKGCLTILIGYVIAVCALFSSRG.

Belongs to the AIM6 family.

In Saccharomyces cerevisiae (strain YJM789) (Baker's yeast), this protein is Altered inheritance of mitochondria protein 6 (AIM6).